A 61-amino-acid polypeptide reads, in one-letter code: Small ribosomal subunit protein uS14 (61 aa).

C24, C27, C40, and C43 together coordinate Zn(2+).

Belongs to the universal ribosomal protein uS14 family. Zinc-binding uS14 subfamily. As to quaternary structure, part of the 30S ribosomal subunit. Contacts proteins S3 and S10. Requires Zn(2+) as cofactor.

Binds 16S rRNA, required for the assembly of 30S particles and may also be responsible for determining the conformation of the 16S rRNA at the A site. In Sulfurimonas denitrificans (strain ATCC 33889 / DSM 1251) (Thiomicrospira denitrificans (strain ATCC 33889 / DSM 1251)), this protein is Small ribosomal subunit protein uS14.